Here is a 398-residue protein sequence, read N- to C-terminus: 4-hydroxy-3-methylbut-2-enyl diphosphate reductase (398 aa).

Cys-66 is a binding site for [4Fe-4S] cluster. Position 96 (His-96) interacts with (2E)-4-hydroxy-3-methylbut-2-enyl diphosphate. His-96 contacts dimethylallyl diphosphate. His-96 is an isopentenyl diphosphate binding site. Cys-157 contacts [4Fe-4S] cluster. His-185 serves as a coordination point for (2E)-4-hydroxy-3-methylbut-2-enyl diphosphate. His-185 serves as a coordination point for dimethylallyl diphosphate. His-185 contributes to the isopentenyl diphosphate binding site. Glu-187 functions as the Proton donor in the catalytic mechanism. Thr-250 serves as a coordination point for (2E)-4-hydroxy-3-methylbut-2-enyl diphosphate. Cys-288 contributes to the [4Fe-4S] cluster binding site. Residues Ser-317, Ser-318, Asn-319, and Ser-379 each coordinate (2E)-4-hydroxy-3-methylbut-2-enyl diphosphate. Dimethylallyl diphosphate-binding residues include Ser-317, Ser-318, Asn-319, and Ser-379. Positions 317, 318, 319, and 379 each coordinate isopentenyl diphosphate.

This sequence belongs to the IspH family. The cofactor is [4Fe-4S] cluster.

The catalysed reaction is isopentenyl diphosphate + 2 oxidized [2Fe-2S]-[ferredoxin] + H2O = (2E)-4-hydroxy-3-methylbut-2-enyl diphosphate + 2 reduced [2Fe-2S]-[ferredoxin] + 2 H(+). The enzyme catalyses dimethylallyl diphosphate + 2 oxidized [2Fe-2S]-[ferredoxin] + H2O = (2E)-4-hydroxy-3-methylbut-2-enyl diphosphate + 2 reduced [2Fe-2S]-[ferredoxin] + 2 H(+). It functions in the pathway isoprenoid biosynthesis; dimethylallyl diphosphate biosynthesis; dimethylallyl diphosphate from (2E)-4-hydroxy-3-methylbutenyl diphosphate: step 1/1. Its pathway is isoprenoid biosynthesis; isopentenyl diphosphate biosynthesis via DXP pathway; isopentenyl diphosphate from 1-deoxy-D-xylulose 5-phosphate: step 6/6. Catalyzes the conversion of 1-hydroxy-2-methyl-2-(E)-butenyl 4-diphosphate (HMBPP) into a mixture of isopentenyl diphosphate (IPP) and dimethylallyl diphosphate (DMAPP). Acts in the terminal step of the DOXP/MEP pathway for isoprenoid precursor biosynthesis. In Prochlorococcus marinus (strain MIT 9313), this protein is 4-hydroxy-3-methylbut-2-enyl diphosphate reductase.